We begin with the raw amino-acid sequence, 703 residues long: UvrABC system protein B (703 aa).

The 387-residue stretch at 33 to 419 (ERIENGENDV…SDGVVEQIIR (387 aa)) folds into the Helicase ATP-binding domain. 46–53 (GATGTGKT) provides a ligand contact to ATP. Residues 99-122 (YYDYYQPEAYIPQTDTYIEKDSNI) carry the Beta-hairpin motif. Positions 436–589 (QIDDLLAEIK…QIAYNQEHGI (154 aa)) constitute a Helicase C-terminal domain. One can recognise a UVR domain in the interval 659–694 (ADLIRQLSEQMHTAAEQLQFELAARLRDEIRDLKKE).

Belongs to the UvrB family. In terms of assembly, forms a heterotetramer with UvrA during the search for lesions. Interacts with UvrC in an incision complex.

It is found in the cytoplasm. Its function is as follows. The UvrABC repair system catalyzes the recognition and processing of DNA lesions. A damage recognition complex composed of 2 UvrA and 2 UvrB subunits scans DNA for abnormalities. Upon binding of the UvrA(2)B(2) complex to a putative damaged site, the DNA wraps around one UvrB monomer. DNA wrap is dependent on ATP binding by UvrB and probably causes local melting of the DNA helix, facilitating insertion of UvrB beta-hairpin between the DNA strands. Then UvrB probes one DNA strand for the presence of a lesion. If a lesion is found the UvrA subunits dissociate and the UvrB-DNA preincision complex is formed. This complex is subsequently bound by UvrC and the second UvrB is released. If no lesion is found, the DNA wraps around the other UvrB subunit that will check the other stand for damage. In Bifidobacterium longum (strain NCC 2705), this protein is UvrABC system protein B.